Reading from the N-terminus, the 150-residue chain is D-aminoacyl-tRNA deacylase (150 aa).

Residues 138–139 (GP) carry the Gly-cisPro motif, important for rejection of L-amino acids motif.

Belongs to the DTD family. In terms of assembly, homodimer.

Its subcellular location is the cytoplasm. The catalysed reaction is glycyl-tRNA(Ala) + H2O = tRNA(Ala) + glycine + H(+). The enzyme catalyses a D-aminoacyl-tRNA + H2O = a tRNA + a D-alpha-amino acid + H(+). In terms of biological role, an aminoacyl-tRNA editing enzyme that deacylates mischarged D-aminoacyl-tRNAs. Also deacylates mischarged glycyl-tRNA(Ala), protecting cells against glycine mischarging by AlaRS. Acts via tRNA-based rather than protein-based catalysis; rejects L-amino acids rather than detecting D-amino acids in the active site. By recycling D-aminoacyl-tRNA to D-amino acids and free tRNA molecules, this enzyme counteracts the toxicity associated with the formation of D-aminoacyl-tRNA entities in vivo and helps enforce protein L-homochirality. This Chlorobium phaeobacteroides (strain DSM 266 / SMG 266 / 2430) protein is D-aminoacyl-tRNA deacylase.